The primary structure comprises 203 residues: Translation initiation factor IF-3 (203 aa).

Positions 172–182 are enriched in basic and acidic residues; the sequence is EAPKNEKKTKE. The interval 172-203 is disordered; sequence EAPKNEKKTKENNPPFNRINLMKGENHAKNED.

The protein belongs to the IF-3 family. Monomer.

Its subcellular location is the cytoplasm. Its function is as follows. IF-3 binds to the 30S ribosomal subunit and shifts the equilibrium between 70S ribosomes and their 50S and 30S subunits in favor of the free subunits, thus enhancing the availability of 30S subunits on which protein synthesis initiation begins. The polypeptide is Translation initiation factor IF-3 (Helicobacter pylori (strain ATCC 700392 / 26695) (Campylobacter pylori)).